Reading from the N-terminus, the 265-residue chain is Short-chain dehydrogenase/reductase fsr5 (265 aa).

An N-terminal signal peptide occupies residues 1-32 (MASLGKYVSKLAGSRVLVIGGSSGIGFGVAEA). Residues Ser-22, Ser-23, Ile-25, Ser-45, and Lys-50 each contribute to the NADP(+) site. The N-linked (GlcNAc...) asparagine glycan is linked to Asn-62. The NADP(+) site is built by Asn-88, Arg-130, and Thr-204. N-linked (GlcNAc...) asparagine glycans are attached at residues Asn-218 and Asn-250.

Belongs to the short-chain dehydrogenases/reductases (SDR) family.

Functionally, short-chain dehydrogenase/reductase; part of the gene cluster that mediates the biosynthesis of fusarubins, highly pigmented naphthoquinones responsible for the coloration of the fruiting bodies. The non-reducing polyketide synthase FSR1 is responsible for the condensation of seven acetyl-CoA units to yield a haptaketide. After rings A and B are formed by aldol-type cyclization, the PKS-derived product is released as 6-O-demethylfusarubinaldehyde. Then, two hydroxyl groups at C-5 and C-10 are incorporated by FSR3, and simultaneously hydroxyl groups at C-6 and C-8 are methylated by FSR2. The aldehyde is, on the one hand, reduced by FSR3 to 8-O-methylfusarubin alcohol, which equilibrates mainly with 8-O-methylfusarubin and only small amounts of 8-O-methylnectriafurone. On the other hand, the aldehyde can be oxidized to form 8-O-methylfusarubinic acid, a reaction driven by FSR3 equilibrating with 8-O-methylfusarubinlactone, finally resulting in 8-O-methylanhydrofusarubinlactol after a further reduction step and loss of water. 8-O-Methylfusarubinic acid can also undergo decarboxylation, resulting in 8-O-methyl-13-hydroxynorjavanicin after another hydroxylation step at C-13. Both steps are most likely also accomplished by FSR3. No enzymatic function has been determined so far for either FSR4 and FSR5. Their deletion does not alter the product spectrum, but the possibility that they catalyze specific enzymatic steps during perithecium development cannot be ruled out. FSR4 might possess a regulatory function in the biosynthesis of fusarubins. In Gibberella fujikuroi (strain CBS 195.34 / IMI 58289 / NRRL A-6831) (Bakanae and foot rot disease fungus), this protein is Short-chain dehydrogenase/reductase fsr5.